Consider the following 443-residue polypeptide: MDWQTLLTRERLGKPVHSNDELGRSAFHKDHDRIIFSGAFRRLGRKTQVHPVSSNDHIHTRLTHSLEVACVGRSLGMRVGEILREELPEWCDPSDLGVIVQSACLAHDIGNPPFGHSGEDAIRNWFQQAAGRGWLDEMSDAERSDFLHFEGNAQGFRVLTQLEYHQFDGGTRLTYATLGTYLKYPWTSRHAEALGYKKHKFGCYQSELPLLEQITHKLGMPQLDDERWARHPLVYLMEAADDICYGLIDLEDGLEMELLEYSEVEALLLGLVGDDLPDTYRQLGPRDSRRRKLAILRGKAIEHLTNAAARAFVDQQQALLAGQLAGDLVEHMHGPAKLCVQRAKAIAREKIFQDKRKTLHEIGAYTTLEILLNAFCGAALEQYGGHTPSFKNRRILDLLGRNAPDPQWPLYRAFLQVIDFIAGMTDSYATEMAREMTGRSSPS.

The HD domain occupies 61-246; it reads RLTHSLEVAC…MEAADDICYG (186 aa).

Belongs to the dGTPase family. Type 3 subfamily.

The chain is Deoxyguanosinetriphosphate triphosphohydrolase-like protein from Pseudomonas aeruginosa (strain LESB58).